A 744-amino-acid chain; its full sequence is Cell surface receptor daf-4 (744 aa).

An N-terminal signal peptide occupies residues 1 to 31 (MNQKGTVRLKALVLICLPLFLIATPVPVAVT). The Extracellular portion of the chain corresponds to 48 to 253 (WANTLVSKVA…IALLILAYVG (206 aa)). Asn-60, Asn-134, and Asn-165 each carry an N-linked (GlcNAc...) asparagine glycan. A helical membrane pass occupies residues 254–274 (WKFQQNKKEEIKKQQKIKFDM). Topologically, residues 275–744 (EKTDALEAGN…PSGTFGTFTT (470 aa)) are cytoplasmic. A Protein kinase domain is found at 306-603 (ITDFQLISKG…FARVWNHIMS (298 aa)). ATP-binding positions include 312-320 (ISKGRFGKV) and Lys-338. Asp-440 functions as the Proton acceptor in the catalytic mechanism. Disordered stretches follow at residues 605 to 686 (PDSS…PEPE) and 724 to 744 (AGADTRASTPTPSGTFGTFTT). Over residues 620-639 (RGVDDVEQSEKPEGIEEMQH) the composition is skewed to basic and acidic residues. Residues 731–744 (STPTPSGTFGTFTT) show a composition bias toward low complexity.

The protein belongs to the protein kinase superfamily. TKL Ser/Thr protein kinase family. TGFB receptor subfamily. As to quaternary structure, may interact with daf-1 to regulate dauer larva development. Interacts with sma-10. Pharynx, intestine, hypodermis and body wall muscles in L1 through to adult stages. Also expressed in head neurons, ventral cord and tail neurons. Subset of head neurons show coexpression with daf-1 when dauer/nondauer decision is made.

The protein resides in the cell membrane. It catalyses the reaction L-threonyl-[receptor-protein] + ATP = O-phospho-L-threonyl-[receptor-protein] + ADP + H(+). The enzyme catalyses L-seryl-[receptor-protein] + ATP = O-phospho-L-seryl-[receptor-protein] + ADP + H(+). Involved in a TGF-beta pathway. May be a receptor for TGF-beta-like ligand daf-7. Controls the decision of whether or not larvae enter a developmentally arrested state, known as dauer, in response to environmental conditions. Regulates body size and male tail patterning. Involved in regulating entry into quiescence triggered by satiety. Involved in sensitivity to CO2 levels. The polypeptide is Cell surface receptor daf-4 (Caenorhabditis elegans).